Reading from the N-terminus, the 153-residue chain is UPF0743 protein YCR087C-A (153 aa).

2 consecutive C2HC LYAR-type zinc fingers follow at residues 1–26 and 27–52; these read MVTFNCEVCNDTVPKKNTEKHYYRCP and NAYYTCIDCSKTFEDGVSYKNHTSCI. Residues Cys6, Cys9, His21, Cys25, Cys32, Cys35, His48, and Cys51 each contribute to the Zn(2+) site. The interval 63 to 96 is disordered; that stretch reads YKGNKKQKQKQQQKQQQKQHQHQPVATPAKKVEK. Over residues 65–83 the composition is skewed to basic residues; sequence GNKKQKQKQQQKQQQKQHQ.

This sequence belongs to the UPF0743 family.

The protein resides in the nucleus. The protein localises to the nucleolus. The protein is UPF0743 protein YCR087C-A of Saccharomyces cerevisiae (strain ATCC 204508 / S288c) (Baker's yeast).